The chain runs to 133 residues: Cytochrome c' (133 aa).

5 residues coordinate heme c: Arg12, Thr72, Cys122, Cys125, and His126.

In terms of processing, binds 1 heme c group covalently per subunit.

Functionally, cytochrome c' is the most widely occurring bacterial c-type cytochrome. Cytochromes c' are high-spin proteins and the heme has no sixth ligand. Their exact function is not known. This Rhodocyclus tenuis (Rhodospirillum tenue) protein is Cytochrome c'.